A 220-amino-acid chain; its full sequence is Deoxyribose-phosphate aldolase 2 (220 aa).

The active-site Proton donor/acceptor is D89. The active-site Schiff-base intermediate with acetaldehyde is the K151. K180 acts as the Proton donor/acceptor in catalysis.

This sequence belongs to the DeoC/FbaB aldolase family. DeoC type 1 subfamily.

The protein localises to the cytoplasm. It carries out the reaction 2-deoxy-D-ribose 5-phosphate = D-glyceraldehyde 3-phosphate + acetaldehyde. It functions in the pathway carbohydrate degradation; 2-deoxy-D-ribose 1-phosphate degradation; D-glyceraldehyde 3-phosphate and acetaldehyde from 2-deoxy-alpha-D-ribose 1-phosphate: step 2/2. Its function is as follows. Catalyzes a reversible aldol reaction between acetaldehyde and D-glyceraldehyde 3-phosphate to generate 2-deoxy-D-ribose 5-phosphate. The sequence is that of Deoxyribose-phosphate aldolase 2 from Staphylococcus aureus (strain COL).